A 202-amino-acid polypeptide reads, in one-letter code: ATP-dependent Clp protease proteolytic subunit (202 aa).

Serine 101 functions as the Nucleophile in the catalytic mechanism. Histidine 126 is a catalytic residue.

Belongs to the peptidase S14 family. As to quaternary structure, component of the chloroplastic Clp protease core complex.

It is found in the plastid. Its subcellular location is the chloroplast stroma. It carries out the reaction Hydrolysis of proteins to small peptides in the presence of ATP and magnesium. alpha-casein is the usual test substrate. In the absence of ATP, only oligopeptides shorter than five residues are hydrolyzed (such as succinyl-Leu-Tyr-|-NHMec, and Leu-Tyr-Leu-|-Tyr-Trp, in which cleavage of the -Tyr-|-Leu- and -Tyr-|-Trp bonds also occurs).. Its function is as follows. Cleaves peptides in various proteins in a process that requires ATP hydrolysis. Has a chymotrypsin-like activity. Plays a major role in the degradation of misfolded proteins. This Calycanthus floridus var. glaucus (Eastern sweetshrub) protein is ATP-dependent Clp protease proteolytic subunit.